Reading from the N-terminus, the 130-residue chain is Small ribosomal subunit protein uS8 (130 aa).

This sequence belongs to the universal ribosomal protein uS8 family. In terms of assembly, part of the 30S ribosomal subunit. Contacts proteins S5 and S12.

One of the primary rRNA binding proteins, it binds directly to 16S rRNA central domain where it helps coordinate assembly of the platform of the 30S subunit. The sequence is that of Small ribosomal subunit protein uS8 from Shewanella baltica (strain OS223).